A 439-amino-acid polypeptide reads, in one-letter code: Transmembrane protease serine 11F (439 aa).

Topologically, residues Met-1–Leu-33 are cytoplasmic. Residues Phe-34 to Val-54 form a helical; Signal-anchor for type II membrane protein membrane-spanning segment. The Extracellular portion of the chain corresponds to Glu-55–Leu-439. Residues Lys-58–Ser-176 enclose the SEA domain. Residues Ile-207–Gly-438 enclose the Peptidase S1 domain. Cys-234 and Cys-250 are disulfide-bonded. Residues His-249 and Asp-294 each act as charge relay system in the active site. 2 disulfides stabilise this stretch: Cys-359–Cys-375 and Cys-386–Cys-414. Ser-390 (charge relay system) is an active-site residue.

The protein belongs to the peptidase S1 family.

The protein resides in the membrane. Its function is as follows. Probable serine protease. This chain is Transmembrane protease serine 11F (Tmprss11f), found in Mus musculus (Mouse).